The chain runs to 353 residues: uncharacterized protein (353 aa).

Positions 1–20 are cleaved as a signal peptide; the sequence is MLMRSVCFILLAVLLFSLSA. Cys21 is lipidated: N-palmitoyl cysteine. Residue Cys21 is the site of S-diacylglycerol cysteine attachment.

The protein resides in the cell membrane. This is an uncharacterized protein from Bacillus subtilis (strain 168).